The chain runs to 490 residues: Dual specificity protein kinase CLK3 (490 aa).

The tract at residues 1-138 is disordered; it reads MHHCKRYRSP…SKRSSRSVED (138 aa). Tyr7 bears the Phosphotyrosine mark. Phosphoserine is present on residues Ser9, Ser49, Ser51, Ser67, Ser76, and Ser78. Basic and acidic residues-rich tracts occupy residues 26–56 and 63–76; these read YSREHEGRLRYPSRREPPPRRSRSRSHDRIP and EHRDSDTYRCEERS. Positions 88–116 are enriched in basic residues; it reads RSRHRRRSRERAPYRTRKHAHHCHKRRTR. The segment covering 117–130 has biased composition (low complexity); that stretch reads SCSSASSRSQQSSK. A Phosphoserine modification is found at Ser135. The Protein kinase domain occupies 156 to 472; the sequence is YEIVGNLGEG…LAEALLHPFF (317 aa). ATP contacts are provided by residues 162–170 and Lys186; that span reads LGEGTFGKV. Catalysis depends on Asp283, which acts as the Proton acceptor.

The protein belongs to the protein kinase superfamily. CMGC Ser/Thr protein kinase family. Lammer subfamily. In terms of processing, autophosphorylates on all three types of residues. Present at high levels in testis and ovary. In testis, expression is restricted to elongated, maturing spermatozoa. Also present in spleen, brain, lung and liver (at protein level).

It is found in the nucleus. Its subcellular location is the cytoplasm. The protein resides in the cytoplasmic vesicle. The protein localises to the secretory vesicle. It localises to the acrosome. It carries out the reaction L-seryl-[protein] + ATP = O-phospho-L-seryl-[protein] + ADP + H(+). The catalysed reaction is L-threonyl-[protein] + ATP = O-phospho-L-threonyl-[protein] + ADP + H(+). It catalyses the reaction L-tyrosyl-[protein] + ATP = O-phospho-L-tyrosyl-[protein] + ADP + H(+). With respect to regulation, leucettine L41 inhibits its kinase activity and affects the regulation of alternative splicing mediated by phosphorylation of SR proteins. Its function is as follows. Dual specificity kinase acting on both serine/threonine and tyrosine-containing substrates. Phosphorylates serine- and arginine-rich (SR) proteins of the spliceosomal complex. May be a constituent of a network of regulatory mechanisms that enable SR proteins to control RNA splicing and can cause redistribution of SR proteins from speckles to a diffuse nucleoplasmic distribution. Phosphorylates SRSF1 and SRSF3. Regulates the alternative splicing of tissue factor (F3) pre-mRNA in endothelial cells. In Mus musculus (Mouse), this protein is Dual specificity protein kinase CLK3.